Reading from the N-terminus, the 906-residue chain is Ectonucleotide pyrophosphatase/phosphodiesterase family member 1 (906 aa).

The tract at residues 1-22 (MERDGDQAGHGPRHGSAGNGRE) is disordered. At 1–58 (MERDGDQAGHGPRHGSAGNGRELESPAAASLLAPMDLGEEPLEKAERARPAKDPNTYK) the chain is on the cytoplasmic side. Serine 25 bears the Phosphoserine mark. Residues 27 to 34 (AAASLLAP) carry the Di-leucine motif motif. Residues 59–79 (VLSLVLSVCVLTTILGCIFGL) form a helical; Signal-anchor for type II membrane protein membrane-spanning segment. Topologically, residues 80-906 (KPSCAKEVKS…THLPIFSQED (827 aa)) are extracellular. SMB domains follow at residues 86–126 (EVKS…VEPT) and 127–171 (HIWT…DKKS). 10 disulfides stabilise this stretch: cysteine 90–cysteine 104, cysteine 94–cysteine 122, cysteine 102–cysteine 115, cysteine 108–cysteine 114, cysteine 131–cysteine 148, cysteine 136–cysteine 166, cysteine 146–cysteine 159, cysteine 152–cysteine 158, cysteine 177–cysteine 223, and cysteine 185–cysteine 397. The N-linked (GlcNAc...) asparagine glycan is linked to asparagine 161. The tract at residues 173–573 (VEETCESIDT…APNNGSHGSL (401 aa)) is phosphodiesterase. AMP is bound by residues aspartate 200, threonine 238, and asparagine 259. 2 residues coordinate Zn(2+): aspartate 200 and threonine 238. Threonine 238 acts as the AMP-threonine intermediate in catalysis. 2 residues coordinate CMP: threonine 238 and asparagine 259. The dTMP site is built by threonine 238 and asparagine 259. GMP is bound by residues threonine 238 and asparagine 259. At threonine 238 the chain carries Phosphothreonine. A glycan (N-linked (GlcNAc...) asparagine) is linked at asparagine 267. Residues leucine 272, lysine 277, and tyrosine 322 each coordinate GMP. Positions 277 and 322 each coordinate AMP. CMP-binding residues include lysine 277 and tyrosine 322. Residue tyrosine 322 coordinates dTMP. The N-linked (GlcNAc...) asparagine glycan is linked to asparagine 323. Residue aspartate 358 coordinates AMP. Zn(2+) is bound by residues aspartate 358, histidine 362, aspartate 405, and histidine 406. A CMP-binding site is contributed by aspartate 358. Aspartate 358 is a dTMP binding site. A GMP-binding site is contributed by aspartate 358. Histidine 362 is a 2',3'-cGAMP binding site. Histidine 406 contributes to the AMP binding site. Residue histidine 406 coordinates CMP. Histidine 406 is a binding site for dTMP. Histidine 406 is a binding site for GMP. 6 cysteine pairs are disulfide-bonded: cysteine 413/cysteine 512, cysteine 462/cysteine 849, cysteine 596/cysteine 653, cysteine 607/cysteine 707, cysteine 609/cysteine 692, and cysteine 819/cysteine 829. Residue asparagine 459 is glycosylated (N-linked (GlcNAc...) asparagine). Serine 514 provides a ligand contact to 2',3'-cGAMP. Histidine 517 is a binding site for AMP. Residue histidine 517 participates in Zn(2+) binding. Histidine 517 contacts CMP. A dTMP-binding site is contributed by histidine 517. Histidine 517 provides a ligand contact to GMP. 2 N-linked (GlcNAc...) asparagine glycosylation sites follow: asparagine 567 and asparagine 624. The segment at 579–628 (KPIYNPSHPKEEGFLSQCPIKSTSNDLGCTCDPWIVPIKDFEKQLNLTTE) is linker. Positions 635–906 (HMTVPYGRPR…THLPIFSQED (272 aa)) are nuclease-like domain. Ca(2+) is bound by residues aspartate 781, aspartate 783, aspartate 785, arginine 787, and aspartate 789.

It belongs to the nucleotide pyrophosphatase/phosphodiesterase family. As to quaternary structure, ectonucleotide pyrophosphatase/phosphodiesterase family member 1: Homodimer. Ectonucleotide pyrophosphatase/phosphodiesterase family member 1: Interacts with INSR; leading to inhibit INSR autophosphorylation and subsequent activation of INSR kinase activity. Ectonucleotide pyrophosphatase/phosphodiesterase family member 1, secreted form: Monomeric. Zn(2+) is required as a cofactor. Post-translationally, N-glycosylated. The secreted form is produced through cleavage at Lys-85 by intracellular processing. As to expression, selectively expressed on the surface of antibody-secreting cells. Expressed in osteocytes and osteoclasts.

Its subcellular location is the cell membrane. The protein resides in the basolateral cell membrane. It is found in the secreted. The catalysed reaction is Hydrolytically removes 5'-nucleotides successively from the 3'-hydroxy termini of 3'-hydroxy-terminated oligonucleotides.. The enzyme catalyses a ribonucleoside 5'-triphosphate + H2O = a ribonucleoside 5'-phosphate + diphosphate + H(+). It carries out the reaction ATP + H2O = AMP + diphosphate + H(+). It catalyses the reaction UTP + H2O = UMP + diphosphate + H(+). The catalysed reaction is GTP + H2O = GMP + diphosphate + H(+). The enzyme catalyses CTP + H2O = CMP + diphosphate + H(+). It carries out the reaction 2',3'-cGAMP + 2 H2O = GMP + AMP + 2 H(+). It catalyses the reaction P(1),P(4)-bis(5'-adenosyl) tetraphosphate + H2O = AMP + ATP + 2 H(+). The catalysed reaction is 3',5'-cyclic AMP + H2O = AMP + H(+). At low concentrations of ATP, a phosphorylated intermediate is formed which inhibits further hydrolysis. Functionally, nucleotide pyrophosphatase that generates diphosphate (PPi) and functions in bone mineralization and soft tissue calcification by regulating pyrophosphate levels. PPi inhibits bone mineralization and soft tissue calcification by binding to nascent hydroxyapatite crystals, thereby preventing further growth of these crystals. Preferentially hydrolyzes ATP, but can also hydrolyze other nucleoside 5' triphosphates such as GTP, CTP and UTP to their corresponding monophosphates with release of pyrophosphate, as well as diadenosine polyphosphates, and also 3',5'-cAMP to AMP. May also be involved in the regulation of the availability of nucleotide sugars in the endoplasmic reticulum and Golgi, and the regulation of purinergic signaling. Inhibits ectopic joint calcification and maintains articular chondrocytes by repressing hedgehog signaling; it is however unclear whether hedgehog inhibition is direct or indirect. Appears to modulate insulin sensitivity. Also involved in melanogenesis. Also able to hydrolyze 2',3'-cGAMP (cyclic GMP-AMP), a second messenger that activates TMEM173/STING and triggers type-I interferon production. 2',3'-cGAMP degradation takes place in the lumen or extracellular space, and not in the cytosol where it is produced; the role of 2',3'-cGAMP hydrolysis is therefore unclear. Not able to hydrolyze the 2',3'-cGAMP linkage isomer 3',3'-cGAMP. The sequence is that of Ectonucleotide pyrophosphatase/phosphodiesterase family member 1 from Mus musculus (Mouse).